The sequence spans 459 residues: MKISVRNLEPTKVKLTVTVEPEELNPYLDAARKEIAKQVNVPGFRKGHVPGKIIDQRIGFAAVAGEAVNDAVPELYSKALDEKKIRPMAQPEFDVQDVPQSANDETKLKFTATVERRPDIELPEIDGLEIAISKPEVKDEDVDKRLETLRQRFGTLVGVDRPAAKGDFANIDLTAEIDGETVDSQEGVSYELGSNTMLDGLDEALDGLSAGEETTFEGTLEAGEHEGQKATVKVKVNSVKAEELPELNDEFASEASEFDTLDELKADIRKAAAQDAEGRQATEARDAFIAKLQEGLEIPVPKGVKANMVEEQLKGMTPDPEKATKEQKAQAEETVEKDLRDQMVLDALAEKLDVQVSQSDVFNFLASIAQQYGMDPNNFIQAIIKNGQLGSAVQEVGRSKGLLAGMRAVKFTADGEVVDLSAFLGEAAEDEESESVEAASAAAAVADELSAKDDAKDAE.

The 80-residue stretch at 166 to 245 folds into the PPIase FKBP-type domain; it reads GDFANIDLTA…VNSVKAEELP (80 aa).

This sequence belongs to the FKBP-type PPIase family. Tig subfamily.

It localises to the cytoplasm. It catalyses the reaction [protein]-peptidylproline (omega=180) = [protein]-peptidylproline (omega=0). Functionally, involved in protein export. Acts as a chaperone by maintaining the newly synthesized protein in an open conformation. Functions as a peptidyl-prolyl cis-trans isomerase. The sequence is that of Trigger factor from Bifidobacterium longum (strain DJO10A).